A 170-amino-acid chain; its full sequence is Urease accessory protein UreE (170 aa).

It belongs to the UreE family.

It is found in the cytoplasm. Involved in urease metallocenter assembly. Binds nickel. Probably functions as a nickel donor during metallocenter assembly. In Helicobacter pylori (strain Shi470), this protein is Urease accessory protein UreE.